Reading from the N-terminus, the 248-residue chain is Lysine-rich arabinogalactan protein 19 (248 aa).

The signal sequence occupies residues 1 to 24 (MESNSIIWSLLLASALISSFSVNA). Residues 25–37 (QGPAASPVTSTTT) are compositionally biased toward low complexity. The interval 25-221 (QGPAASPVTS…APSPNTNGGN (197 aa)) is disordered. 3 stretches are compositionally biased toward pro residues: residues 38 to 57 (APPPTTAAPPTTAAPPPTTT), 67 to 86 (PASPVTPPPAVTPTSPPAPK), and 94 to 171 (ATPP…PAPA). Residues 173-187 (TKHKRKHKHKRHHHA) are compositionally biased toward basic residues. The segment covering 189 to 203 (APAPIPPSPPSPPVL) has biased composition (pro residues). Serine 196 carries the GPI-anchor amidated serine lipid modification. A propeptide spans 197–248 (PPSPPVLTDPQDTAPAPSPNTNGGNALNQLKGRAVMWLNTGLVILFLLAMTA) (removed in mature form).

Belongs to the lysine-rich AGP family. O-glycosylated on the hydroxyproline residues. Strongly expressed in stems, moderately expressed in flowers and roots and weakly expressed in young leaves.

It is found in the cell membrane. In terms of biological role, proteoglycan that seems to be implicated in diverse developmental roles such as differentiation, cell-cell recognition, embryogenesis and programmed cell death. The protein is Lysine-rich arabinogalactan protein 19 (AGP19) of Arabidopsis thaliana (Mouse-ear cress).